The following is a 162-amino-acid chain: Inorganic pyrophosphatase (162 aa).

E8 contacts Mg(2+). Substrate is bound by residues K16, R30, and Y42. D52, D57, D84, and D89 together coordinate Mg(2+). Catalysis depends on D89, which acts as the Proton acceptor. Y126 contacts substrate.

It belongs to the PPase family. As to quaternary structure, homohexamer. It depends on Mg(2+) as a cofactor.

It is found in the cytoplasm. The catalysed reaction is diphosphate + H2O = 2 phosphate + H(+). In terms of biological role, catalyzes the hydrolysis of inorganic pyrophosphate (PPi) forming two phosphate ions. This is Inorganic pyrophosphatase from Mycobacterium leprae (strain TN).